A 151-amino-acid chain; its full sequence is Transcriptional regulator MraZ (151 aa).

SpoVT-AbrB domains lie at A5 to E51 and A81 to Q124.

Belongs to the MraZ family. Forms oligomers.

It is found in the cytoplasm. The protein resides in the nucleoid. The protein is Transcriptional regulator MraZ of Neisseria gonorrhoeae (strain ATCC 700825 / FA 1090).